Here is a 232-residue protein sequence, read N- to C-terminus: Ribose-5-phosphate isomerase A (232 aa).

Substrate is bound by residues 31–34, 88–91, and 101–104; these read TGST, DGAD, and KGGG. The active-site Proton acceptor is glutamate 110. Lysine 128 provides a ligand contact to substrate.

The protein belongs to the ribose 5-phosphate isomerase family. Homodimer.

The enzyme catalyses aldehydo-D-ribose 5-phosphate = D-ribulose 5-phosphate. It participates in carbohydrate degradation; pentose phosphate pathway; D-ribose 5-phosphate from D-ribulose 5-phosphate (non-oxidative stage): step 1/1. Catalyzes the reversible conversion of ribose-5-phosphate to ribulose 5-phosphate. The sequence is that of Ribose-5-phosphate isomerase A from Lactobacillus johnsonii (strain CNCM I-12250 / La1 / NCC 533).